Consider the following 83-residue polypeptide: Small ribosomal subunit protein bS16 (83 aa).

Belongs to the bacterial ribosomal protein bS16 family.

The chain is Small ribosomal subunit protein bS16 from Albidiferax ferrireducens (strain ATCC BAA-621 / DSM 15236 / T118) (Rhodoferax ferrireducens).